The primary structure comprises 186 residues: MRCPYCGGLDTQVKDSRPSDDASAIRRRRICPDCGGRFTTFERVQLRDLTVVKRSGRRVPFDRDKLQRSIDVALRKRPVEADRVERLVSGIARQLESGGEAEVSSEAIGELVMEGLKALDDVAYVRFASVYKNFREARDFEELLGRLNGAGRPGGEPEPPDEAAPGPAAAPGEGGEAPARRARSRA.

The tract at residues 1-24 is disordered; it reads MRCPYCGGLDTQVKDSRPSDDASA. A zinc finger lies at 3–34; it reads CPYCGGLDTQVKDSRPSDDASAIRRRRICPDC. The span at 12–24 shows a compositional bias: basic and acidic residues; it reads QVKDSRPSDDASA. Positions 49 to 139 constitute an ATP-cone domain; sequence LTVVKRSGRR…VYKNFREARD (91 aa). Positions 146-186 are disordered; that stretch reads RLNGAGRPGGEPEPPDEAAPGPAAAPGEGGEAPARRARSRA.

This sequence belongs to the NrdR family. Zn(2+) is required as a cofactor.

Its function is as follows. Negatively regulates transcription of bacterial ribonucleotide reductase nrd genes and operons by binding to NrdR-boxes. The protein is Transcriptional repressor NrdR of Methylobacterium sp. (strain 4-46).